The following is a 141-amino-acid chain: Large ribosomal subunit protein uL16c (141 aa).

Residues 1 to 17 (MLSPRRTKYRKQHRGRL) are compositionally biased toward basic residues. The disordered stretch occupies residues 1–20 (MLSPRRTKYRKQHRGRLKGT).

It belongs to the universal ribosomal protein uL16 family. As to quaternary structure, part of the 50S ribosomal subunit.

It localises to the plastid. Its subcellular location is the chloroplast. The chain is Large ribosomal subunit protein uL16c from Staurastrum punctulatum (Green alga).